Here is a 443-residue protein sequence, read N- to C-terminus: MMEESGIETTPPGTPPLHPAGLAAVPSTEAHSAATSSFSSPNVSGMESLPPHVYSTPQPSLPPVQPSAPPPFVSMSPAPSVPLSGTSVPPSVSPSPATAFSGPPMSHFPPATSASGALLSAPPSGPPISGFSVGTTYDITRGHAGRAPQTPLMPSFSAPPVTGILPAPITQQASMTSLAQGPGTTSAITFPEEQEDPRINRGQDDAPAGGIWGFIKGVAGNPMVKSVLDKTKHSVESMITTLDPGMAPYIKSGGELDIVVTSNKEVKVAAVRDAFQEVFGLAVVVGEAGQSNIAPQPVGYAAGLKGAQERIDSLRRSGAIHEKQTAVSVENFIAELLPDKWFDIGCLVVEDPVHGIRLEAFTQATPVPLEFVQQAQSLTPQDYNLRWSGLLVTVGEVLEKSLLNVSRTDWHLAFTGMSRRQMIYSAAKAVAGMYKQRLPPRPM.

A disordered region spans residues 1 to 165 (MMEESGIETT…FSAPPVTGIL (165 aa)). Residues 29–45 (EAHSAATSSFSSPNVSG) show a composition bias toward polar residues. The span at 59 to 72 (PSLPPVQPSAPPPF) shows a compositional bias: pro residues. Composition is skewed to low complexity over residues 81–96 (VPLSGTSVPPSVSPSP) and 109–134 (PPATSASGALLSAPPSGPPISGFSVG). Serine 406 carries the phosphoserine modification.

The protein belongs to the PRRC1 family. In terms of assembly, interacts with PRKAR1A; resulting in PKA activation.

The protein localises to the golgi apparatus. The protein resides in the cytoplasm. Functionally, may act as a regulator of the protein kinase A (PKA) during embryonic development. The protein is Protein PRRC1 (Prrc1) of Mus musculus (Mouse).